The chain runs to 713 residues: Serologically defined colon cancer antigen 8 (713 aa).

A phosphoserine mark is found at serine 4 and serine 28. The disordered stretch occupies residues 84–103 (QADKESEVSPSRRRKMSPLR). The stretch at 129–175 (IHHLEAEVKFCKEELSGMKNKIQVVVLENEGLQQQLKSQRQEETLRE) forms a coiled coil. Residues 194 to 215 (EDSGVGETSKRPFSHDNADFGK) are disordered. A compositionally biased stretch (basic and acidic residues) spans 201–212 (TSKRPFSHDNAD). The interval 216–713 (AASAGEQLEL…QLPSMPQSDC (498 aa)) is sufficient for homodimerization. 2 coiled-coil regions span residues 223 to 273 (LELE…LLAA) and 348 to 707 (EEAN…QLPS). The mediates interaction with OFD1 stretch occupies residues 533 to 713 (HQLHLTRQEK…QLPSMPQSDC (181 aa)).

In terms of assembly, homodimer. Interacts with OFD1; the interaction is direct. Interacts with FAM161A. Interacts with RABEP2, ERC1 and CEP131. Expressed in thymus, prostate, testis, ovary, small intestine, colon, mucosa, colon and renal cancer tumors.

Its subcellular location is the cytoplasm. The protein localises to the cytoskeleton. It is found in the microtubule organizing center. It localises to the centrosome. The protein resides in the centriole. Its subcellular location is the cilium basal body. The protein localises to the cell junction. Its function is as follows. Plays a role in the establishment of cell polarity and epithelial lumen formation. Also plays an essential role in ciliogenesis and subsequent Hedgehog signaling pathway that requires the presence of intact primary cilia for pathway activation. Mechanistically, interacts with and mediates RABEP2 centrosomal localization which is critical for ciliogenesis. In Homo sapiens (Human), this protein is Serologically defined colon cancer antigen 8 (SDCCAG8).